A 225-amino-acid chain; its full sequence is RNA chaperone ProQ (225 aa).

The interval 107–169 (KARVQAQRAA…VAAKAPREER (63 aa)) is disordered. The span at 109–118 (RVQAQRAAQQ) shows a compositional bias: low complexity. A compositionally biased stretch (basic residues) spans 137-146 (RERKPRPQQP). The span at 147-156 (RRKEGAEQRK) shows a compositional bias: basic and acidic residues.

It belongs to the ProQ family.

It localises to the cytoplasm. In terms of biological role, RNA chaperone with significant RNA binding, RNA strand exchange and RNA duplexing activities. May regulate ProP activity through an RNA-based, post-transcriptional mechanism. This is RNA chaperone ProQ from Klebsiella pneumoniae subsp. pneumoniae (strain ATCC 700721 / MGH 78578).